The chain runs to 78 residues: Large ribosomal subunit protein bL28 (78 aa).

Residues Met-1–Asn-23 are disordered.

This sequence belongs to the bacterial ribosomal protein bL28 family.

The polypeptide is Large ribosomal subunit protein bL28 (Shewanella frigidimarina (strain NCIMB 400)).